Consider the following 147-residue polypeptide: MHRQFLSSCCQNLFFKFKLLLFEVNQMQYVYIFIGGALGALLRYLISFLNTDGGFPIGTLIANLTGAFVMGLLTALTIAFFSNHPTLKKAITTGFLGALTTFSTFQLELIHMFDHQQFITLLLYAVTSYVFGILLCYVGIKLGGGLS.

Transmembrane regions (helical) follow at residues 29-49, 61-81, 90-110, and 118-138; these read YVYI…ISFL, IANL…IAFF, AITT…LELI, and FITL…LCYV. Na(+) contacts are provided by glycine 97 and threonine 100.

The protein belongs to the fluoride channel Fluc/FEX (TC 1.A.43) family.

The protein localises to the cell membrane. The catalysed reaction is fluoride(in) = fluoride(out). Its activity is regulated as follows. Na(+) is not transported, but it plays an essential structural role and its presence is essential for fluoride channel function. Its function is as follows. Fluoride-specific ion channel. Important for reducing fluoride concentration in the cell, thus reducing its toxicity. This Staphylococcus aureus (strain Mu50 / ATCC 700699) protein is Fluoride-specific ion channel FluC 1.